Here is a 319-residue protein sequence, read N- to C-terminus: Transcription factor bHLH111 (319 aa).

Residues 1–23 (MDHHHHIASRNSSTTSELPSFEP) are disordered. Residues 9–18 (SRNSSTTSEL) are compositionally biased toward polar residues. The region spanning 195 to 244 (SEGSTLSPEKELPKAKLRDKITTLQQIVSPFGKTDTASVLQEAITYINFY) is the bHLH domain.

As to quaternary structure, homodimer.

It localises to the nucleus. The polypeptide is Transcription factor bHLH111 (BHLH111) (Arabidopsis thaliana (Mouse-ear cress)).